The sequence spans 963 residues: Unconventional myosin-XIX (963 aa).

Residues 35–758 enclose the Myosin motor domain; it reads HQLDDLTKVN…MLELLECGRA (724 aa). ATP is bound at residue 132 to 139; sequence GESGAGKT. Residues 602–624 are actin-binding; it reads LEQLLQVLHNTTPHYIRCIKPNS. IQ domains lie at 762 to 782 and 783 to 812; these read EQCARCIQCGWRRHRLQKQEK and QRRAAVLIQAAFRSWLTRKHIRRLHIAATV. Residues 829–963 form a myMOMA region region; the sequence is SKELDGMEEK…LLESHRPVQV (135 aa).

The protein belongs to the TRAFAC class myosin-kinesin ATPase superfamily. Myosin family. Myosin is a hexamer of 2 heavy chains and 4 light chains: interacts with myosin light chains MYL9 and MYL12B.

Its subcellular location is the mitochondrion outer membrane. It is found in the cytoplasm. It localises to the cytoskeleton. Actin-based motor molecule with ATPase activity that localizes to the mitochondrion outer membrane. Motor protein that moves towards the plus-end of actin filaments. Required for mitochondrial inheritance during mitosis. May be involved in mitochondrial transport or positioning. The chain is Unconventional myosin-XIX from Mus musculus (Mouse).